Consider the following 388-residue polypeptide: Protein SopA (388 aa).

It belongs to the ParA family.

This protein is essential for plasmid partition. It ensures the proper distribution of newly replicated plasmids to daughter cells during cell division. SopA is trans-acting. In Escherichia coli O157:H7, this protein is Protein SopA (sopA).